The chain runs to 320 residues: Cytochrome f (320 aa).

An N-terminal signal peptide occupies residues 1 to 35 (MQTRKTFSWIKEEITRSISVLLMIYIITWASISNA). The heme site is built by Tyr-36, Cys-56, Cys-59, and His-60. Residues 286-306 (VQGLLFFLASVILAQIFLVLK) traverse the membrane as a helical segment.

This sequence belongs to the cytochrome f family. As to quaternary structure, the 4 large subunits of the cytochrome b6-f complex are cytochrome b6, subunit IV (17 kDa polypeptide, petD), cytochrome f and the Rieske protein, while the 4 small subunits are PetG, PetL, PetM and PetN. The complex functions as a dimer. Heme is required as a cofactor.

It is found in the plastid. The protein localises to the chloroplast thylakoid membrane. In terms of biological role, component of the cytochrome b6-f complex, which mediates electron transfer between photosystem II (PSII) and photosystem I (PSI), cyclic electron flow around PSI, and state transitions. The chain is Cytochrome f from Manihot esculenta (Cassava).